Consider the following 335-residue polypeptide: Nucleotide-binding protein CYA_0911 (335 aa).

20 to 27 (GLTGSGKT) is an ATP binding site. The tract at residues 306–335 (ARFGPPPPAAGVEQQQVRIPLAGVPAPPHD) is disordered.

It belongs to the RapZ-like family.

Functionally, displays ATPase and GTPase activities. The sequence is that of Nucleotide-binding protein CYA_0911 from Synechococcus sp. (strain JA-3-3Ab) (Cyanobacteria bacterium Yellowstone A-Prime).